Consider the following 148-residue polypeptide: Large ribosomal subunit protein bL9 (148 aa).

This sequence belongs to the bacterial ribosomal protein bL9 family.

Binds to the 23S rRNA. In Methylococcus capsulatus (strain ATCC 33009 / NCIMB 11132 / Bath), this protein is Large ribosomal subunit protein bL9.